The chain runs to 810 residues: Hemoglobin-haptoglobin utilization protein B (810 aa).

The N-terminal stretch at 1–22 (MPIPFKPVLAAAAIAQAFPAFA) is a signal peptide. Residues 34 to 166 (NEITVTGTHK…LGGAVNYQTK (133 aa)) form the TBDR plug domain. The 636-residue stretch at 175 to 810 (DKPYHLGIKG…SYNFTIEAKF (636 aa)) folds into the TBDR beta-barrel domain. The short motif at 793 to 810 (QRFTSPGRSYNFTIEAKF) is the TonB C-terminal box element.

Belongs to the TonB-dependent receptor family.

It is found in the cell outer membrane. Acts as a receptor for hemoglobin or the hemoglobin/haptoglobin complex and is required for heme uptake. The sequence is that of Hemoglobin-haptoglobin utilization protein B (hpuB) from Neisseria meningitidis serogroup A / serotype 4A (strain DSM 15465 / Z2491).